We begin with the raw amino-acid sequence, 497 residues long: 3-octaprenyl-4-hydroxybenzoate carboxy-lyase (497 aa).

Position 175 (asparagine 175) interacts with Mn(2+). Prenylated FMN contacts are provided by residues 178–180 (IYR), 192–194 (RWL), and 197–198 (RG). A Mn(2+)-binding site is contributed by glutamate 241. The active-site Proton donor is the aspartate 290.

Belongs to the UbiD family. As to quaternary structure, homohexamer. Prenylated FMN serves as cofactor. Mn(2+) is required as a cofactor.

Its subcellular location is the cell membrane. The catalysed reaction is a 4-hydroxy-3-(all-trans-polyprenyl)benzoate + H(+) = a 2-(all-trans-polyprenyl)phenol + CO2. It participates in cofactor biosynthesis; ubiquinone biosynthesis. In terms of biological role, catalyzes the decarboxylation of 3-octaprenyl-4-hydroxy benzoate to 2-octaprenylphenol, an intermediate step in ubiquinone biosynthesis. The sequence is that of 3-octaprenyl-4-hydroxybenzoate carboxy-lyase from Escherichia coli O157:H7.